A 358-amino-acid polypeptide reads, in one-letter code: Methylthioribose-1-phosphate isomerase (358 aa).

Substrate contacts are provided by residues 54 to 56, Arg96, and Gln205; that span reads RGA. Catalysis depends on Asp246, which acts as the Proton donor. 256-257 contacts substrate; it reads GK.

It belongs to the eIF-2B alpha/beta/delta subunits family. MtnA subfamily.

It catalyses the reaction 5-(methylsulfanyl)-alpha-D-ribose 1-phosphate = 5-(methylsulfanyl)-D-ribulose 1-phosphate. It functions in the pathway amino-acid biosynthesis; L-methionine biosynthesis via salvage pathway; L-methionine from S-methyl-5-thio-alpha-D-ribose 1-phosphate: step 1/6. Its function is as follows. Catalyzes the interconversion of methylthioribose-1-phosphate (MTR-1-P) into methylthioribulose-1-phosphate (MTRu-1-P). This is Methylthioribose-1-phosphate isomerase from Pseudomonas putida (strain ATCC 47054 / DSM 6125 / CFBP 8728 / NCIMB 11950 / KT2440).